Reading from the N-terminus, the 327-residue chain is MAIITLLEAINQAIDQAMEKDESIVVFGEDAGFEGGVFRVTAGLQKKYGETRVFDTPIAESAIVGSAVGMAINGLKPIAEIQFDGFIFPGYTDLVTHAARMRNRSRGQFTVPMVLRLPHGGGIRALEHHSEALEVLFGSIPGLKVVTPSTPYDAKGLLLAAINDPDPVVFLEPKRIYRAGKQEVPAEMYEIPIGKAKVVKQGTDMTVVAWGSIVREVEKAVKLVEAEGISVEIIDLRTISPIDEETILNSVKKTGKFMVVTEAVKSYGPAAELITMVNEKAFFHLEAAPVRFTGFDITVPLARGEHYHFPQPEKIAAYIRKLAKARP.

Glu-60 lines the thiamine diphosphate pocket.

In terms of assembly, heterodimer of an alpha and a beta chain. Requires thiamine diphosphate as cofactor.

It catalyses the reaction N(6)-[(R)-lipoyl]-L-lysyl-[protein] + pyruvate + H(+) = N(6)-[(R)-S(8)-acetyldihydrolipoyl]-L-lysyl-[protein] + CO2. Functionally, the pyruvate dehydrogenase complex catalyzes the overall conversion of pyruvate to acetyl-CoA and CO(2). It contains multiple copies of three enzymatic components: pyruvate dehydrogenase (E1), dihydrolipoamide acetyltransferase (E2) and lipoamide dehydrogenase (E3). The polypeptide is Pyruvate dehydrogenase E1 component subunit beta (pdhB) (Acholeplasma laidlawii).